A 194-amino-acid polypeptide reads, in one-letter code: Peptidyl-tRNA hydrolase (194 aa).

Tyr-16 is a tRNA binding site. Residue His-21 is the Proton acceptor of the active site. Residues Phe-67, Asn-69, and Asn-115 each contribute to the tRNA site.

It belongs to the PTH family. Monomer.

The protein localises to the cytoplasm. The enzyme catalyses an N-acyl-L-alpha-aminoacyl-tRNA + H2O = an N-acyl-L-amino acid + a tRNA + H(+). Functionally, hydrolyzes ribosome-free peptidyl-tRNAs (with 1 or more amino acids incorporated), which drop off the ribosome during protein synthesis, or as a result of ribosome stalling. Its function is as follows. Catalyzes the release of premature peptidyl moieties from peptidyl-tRNA molecules trapped in stalled 50S ribosomal subunits, and thus maintains levels of free tRNAs and 50S ribosomes. This is Peptidyl-tRNA hydrolase from Salmonella agona (strain SL483).